An 847-amino-acid chain; its full sequence is Zinc transporter ZIP10 (847 aa).

An N-terminal signal peptide occupies residues 1-26 (MMRVHTHTRLCFLCVLTLLYHQCSHC). Residues 136–374 (GRHSHSAGHP…RREVPGSPAH (239 aa)) are disordered. Positions 162-171 (HHENEEHTLA) are enriched in basic and acidic residues. Positions 179–188 (TLGTGATPPS) are enriched in polar residues. Residues 190–269 (SEEHDHDHEH…QEHNDLSDQN (80 aa)) are compositionally biased toward basic and acidic residues. Basic residues-rich tracts occupy residues 270 to 285 (HHHH…HPHL) and 314 to 330 (TRRH…RGRN). An N-linked (GlcNAc...) asparagine glycan is attached at Asn385. Transmembrane regions (helical) follow at residues 447 to 467 (FVSI…VPIL), 474 to 494 (FLLT…ALLH), and 529 to 549 (GLTA…IGMF). Residues 613–676 (ELQPLDSPSK…HSHHGHCHSD (64 aa)) form a disordered region. Residues 629-646 (DSDHPYEAPVKTEEDNVP) show a composition bias toward basic and acidic residues. Basic residues predominate over residues 648–672 (AKSKKHGHGHGHGHGHGHGHSHHGH). Transmembrane regions (helical) follow at residues 705–725 (AIGA…VAVF), 750–770 (IVYN…GTAV), 779–799 (SWIF…DMLP), and 817–837 (FVLQ…IAIF).

This sequence belongs to the ZIP transporter (TC 2.A.5) family. Undergoes N-terminal ectodomain shedding.

The protein localises to the cell membrane. It is found in the apical cell membrane. The enzyme catalyses Zn(2+)(in) = Zn(2+)(out). In terms of biological role, zinc-influx transporter. When associated with slc39a6, the heterodimer slc39a10/slc39a6 has a functional role in epithelial-mesenchymal transition (EMT) during embryonic development. Slc39a10/slc39a6 heterodimers play also an essentiel role in initiating mitosis by importing zinc into cells to initiate a pathway resulting in the onset of mitosis. When associated with slc39a6, the heterodimer controls Ncam1 phosphorylation and integration into focal adhesion complexes during EMT. The protein is Zinc transporter ZIP10 of Danio rerio (Zebrafish).